An 893-amino-acid chain; its full sequence is Alanine--tRNA ligase (893 aa).

Zn(2+)-binding residues include histidine 574, histidine 578, cysteine 678, and histidine 682.

The protein belongs to the class-II aminoacyl-tRNA synthetase family. Zn(2+) is required as a cofactor.

Its subcellular location is the cytoplasm. It catalyses the reaction tRNA(Ala) + L-alanine + ATP = L-alanyl-tRNA(Ala) + AMP + diphosphate. Its function is as follows. Catalyzes the attachment of alanine to tRNA(Ala) in a two-step reaction: alanine is first activated by ATP to form Ala-AMP and then transferred to the acceptor end of tRNA(Ala). Also edits incorrectly charged Ser-tRNA(Ala) and Gly-tRNA(Ala) via its editing domain. The polypeptide is Alanine--tRNA ligase (Bifidobacterium longum (strain NCC 2705)).